A 354-amino-acid chain; its full sequence is Ferrochelatase (354 aa).

His-214 and Glu-295 together coordinate Fe cation.

It belongs to the ferrochelatase family.

The protein resides in the cytoplasm. The catalysed reaction is heme b + 2 H(+) = protoporphyrin IX + Fe(2+). It participates in porphyrin-containing compound metabolism; protoheme biosynthesis; protoheme from protoporphyrin-IX: step 1/1. Catalyzes the ferrous insertion into protoporphyrin IX. This is Ferrochelatase from Burkholderia cenocepacia (strain HI2424).